Here is a 576-residue protein sequence, read N- to C-terminus: Rho GTPase-activating protein gacP (576 aa).

A coiled-coil region spans residues 123–189; it reads LKSIIKTELK…RTNFERVGID (67 aa). In terms of domain architecture, Rho-GAP spans 277-462; it reads EDLSVLLNRE…TIIQNFDRIF (186 aa). Positions 472 to 576 are disordered; that stretch reads VPDTYVPPPN…DEGDAVELSD (105 aa). Low complexity predominate over residues 482–500; the sequence is NTRNNSVNNFNNVQPSSFS. Residues 501 to 513 show a composition bias toward polar residues; that stretch reads ASTSRSINLNKST. Over residues 514–530 the composition is skewed to low complexity; it reads NNPNINDDNNNNNNINN. Over residues 565–576 the composition is skewed to acidic residues; that stretch reads SFDEGDAVELSD.

It localises to the cytoplasm. Its function is as follows. Rho GTPase-activating protein involved in the signal transduction pathway. The polypeptide is Rho GTPase-activating protein gacP (gacP) (Dictyostelium discoideum (Social amoeba)).